The following is a 118-amino-acid chain: Cobalt transport protein CbiN (118 aa).

2 helical membrane passes run 7–27 (INAL…VLGL) and 70–90 (SALF…YFGL). A disordered region spans residues 99 to 118 (ERASAASGAAAAPGDAPEGD). A compositionally biased stretch (low complexity) spans 102 to 118 (SAASGAAAAPGDAPEGD).

The protein belongs to the CbiN family. In terms of assembly, forms an energy-coupling factor (ECF) transporter complex composed of an ATP-binding protein (A component, CbiO), a transmembrane protein (T component, CbiQ) and 2 possible substrate-capture proteins (S components, CbiM and CbiN) of unknown stoichimetry.

Its subcellular location is the cell membrane. The protein operates within cofactor biosynthesis; adenosylcobalamin biosynthesis. In terms of biological role, part of the energy-coupling factor (ECF) transporter complex CbiMNOQ involved in cobalt import. The chain is Cobalt transport protein CbiN from Streptomyces coelicolor (strain ATCC BAA-471 / A3(2) / M145).